The sequence spans 263 residues: 4-hydroxy-tetrahydrodipicolinate reductase (263 aa).

Residues 7-12, 96-98, and 122-125 each bind NAD(+); these read GFKGRM, GTT, and APNF. H152 (proton donor/acceptor) is an active-site residue. H153 contributes to the (S)-2,3,4,5-tetrahydrodipicolinate binding site. The active-site Proton donor is the K156. A (S)-2,3,4,5-tetrahydrodipicolinate-binding site is contributed by 162 to 163; that stretch reads GT.

The protein belongs to the DapB family.

The protein resides in the cytoplasm. It catalyses the reaction (S)-2,3,4,5-tetrahydrodipicolinate + NAD(+) + H2O = (2S,4S)-4-hydroxy-2,3,4,5-tetrahydrodipicolinate + NADH + H(+). It carries out the reaction (S)-2,3,4,5-tetrahydrodipicolinate + NADP(+) + H2O = (2S,4S)-4-hydroxy-2,3,4,5-tetrahydrodipicolinate + NADPH + H(+). It functions in the pathway amino-acid biosynthesis; L-lysine biosynthesis via DAP pathway; (S)-tetrahydrodipicolinate from L-aspartate: step 4/4. Its function is as follows. Catalyzes the conversion of 4-hydroxy-tetrahydrodipicolinate (HTPA) to tetrahydrodipicolinate. This Listeria monocytogenes serovar 1/2a (strain ATCC BAA-679 / EGD-e) protein is 4-hydroxy-tetrahydrodipicolinate reductase.